The chain runs to 428 residues: Beta-1,3-galactosyl-O-glycosyl-glycoprotein beta-1,6-N-acetylglucosaminyltransferase (428 aa).

Residues methionine 1–arginine 9 are Cytoplasmic-facing. The tract at residues leucine 5–arginine 9 is mediates interaction with GOLPH3 and is necessary and sufficient for localization to the Golgi. A helical; Signal-anchor for type II membrane protein transmembrane segment spans residues leucine 10–leucine 32. The stem region stretch occupies residues arginine 33 to phenylalanine 121. Over arginine 33 to histidine 428 the chain is Lumenal. 2 N-linked (GlcNAc...) asparagine glycosylation sites follow: asparagine 58 and asparagine 95. Cystine bridges form between cysteine 59/cysteine 413, cysteine 100/cysteine 172, cysteine 151/cysteine 199, and cysteine 372/cysteine 381. The segment at proline 122–histidine 428 is catalytic. Residues valine 128–histidine 130, aspartate 155–lysine 157, and tyrosine 187 each bind UDP-N-acetyl-alpha-D-glucosamine. Glutamate 243, asparagine 250, lysine 251, arginine 254, glutamate 320, lysine 341, and tyrosine 358 together coordinate a glycoprotein. Glutamate 320 functions as the Nucleophile in the catalytic mechanism. Arginine 378 and lysine 401 together coordinate UDP-N-acetyl-alpha-D-glucosamine.

This sequence belongs to the glycosyltransferase 14 family. In terms of assembly, interacts with GOLPH3; may control GCNT1 retention in the Golgi. Post-translationally, N-glycosylated. Expressed in kidney, liver, stomach, spleen, lung and brain.

Its subcellular location is the golgi apparatus membrane. It catalyses the reaction a 3-O-[beta-D-galactosyl-(1-&gt;3)-N-acetyl-alpha-D-galactosaminyl]-L-seryl-[protein] + UDP-N-acetyl-alpha-D-glucosamine = 3-O-{beta-D-galactosyl-(1-&gt;3)-[N-acetyl-beta-D-glucosaminyl-(1-&gt;6)]-N-acetyl-alpha-D-galactosaminyl}-L-seryl-[protein] + UDP + H(+). The catalysed reaction is a 3-O-[beta-D-galactosyl-(1-&gt;3)-N-acetyl-alpha-D-galactosaminyl]-L-threonyl-[protein] + UDP-N-acetyl-alpha-D-glucosamine = a 3-O-{beta-D-galactosyl-(1-&gt;3)-[N-acetyl-beta-D-glucosaminyl-(1-&gt;6)]-N-acetyl-alpha-D-galactosaminyl}-L-threonyl-[protein] + UDP + H(+). It carries out the reaction a globoside GalGb4Cer + UDP-N-acetyl-alpha-D-glucosamine = a globoside GlcNAc-(beta1-&gt;6)-GalGb4Cer + UDP + H(+). The enzyme catalyses a ganglioside GA1 + UDP-N-acetyl-alpha-D-glucosamine = a ganglioside beta-D-GlcNAc-(1-&gt;6)-GA1 + UDP + H(+). The protein operates within protein modification; protein glycosylation. It participates in glycolipid biosynthesis. Its activity is regulated as follows. Inactivated by thiol-reactive agents. Inhibited by free UDP. Glycosyltransferase that catalyzes the transfer of an N-acetylglucosamine (GlcNAc) moiety in beta1-6 linkage from UDP-GlcNAc onto mucin-type core 1 O-glycan to form the branched mucin-type core 2 O-glycan. The catalysis is metal ion-independent and occurs with inversion of the anomeric configuration of sugar donor. Selectively involved in synthesis of mucin-type core 2 O-glycans that serve as scaffolds for the display of selectin ligand sialyl Lewis X epitope by myeloid cells, with an impact on homeostasis and recruitment to inflammatory sites. Can also act on glycolipid substrates. Transfers GlcNAc moiety to GalGb4Cer globosides in a reaction step to the synthesis of stage-specific embryonic antigen 1 (SSEA-1) determinant. Can use Galbeta1-3GalNAcalpha1-R and Galbeta1-3GalNAcbeta1-R oligosaccharide derivatives as acceptor substrates. The polypeptide is Beta-1,3-galactosyl-O-glycosyl-glycoprotein beta-1,6-N-acetylglucosaminyltransferase (Gcnt1) (Mus musculus (Mouse)).